The sequence spans 507 residues: RNA-splicing ligase RtcB homolog (507 aa).

The Mn(2+) site is built by Asp121, Cys124, His229, His261, and His355. Position 228 to 232 (228 to 232) interacts with GMP; that stretch reads NHYAE. GMP-binding positions include 355-356, 404-407, Ser411, 430-433, and Lys506; these read HN, GGTM, and HGAG. Residue His430 is the GMP-histidine intermediate of the active site.

This sequence belongs to the RtcB family. In terms of assembly, catalytic component of the tRNA-splicing ligase complex. Mn(2+) serves as cofactor.

It catalyses the reaction a 3'-end 3'-phospho-ribonucleotide-RNA + a 5'-end dephospho-ribonucleoside-RNA + GTP = a ribonucleotidyl-ribonucleotide-RNA + GMP + diphosphate. The enzyme catalyses a 3'-end 2',3'-cyclophospho-ribonucleotide-RNA + a 5'-end dephospho-ribonucleoside-RNA + GTP + H2O = a ribonucleotidyl-ribonucleotide-RNA + GMP + diphosphate + H(+). In terms of biological role, catalytic subunit of the tRNA-splicing ligase complex that acts by directly joining spliced tRNA halves to mature-sized tRNAs by incorporating the precursor-derived splice junction phosphate into the mature tRNA as a canonical 3',5'-phosphodiester. May act as an RNA ligase with broad substrate specificity, and may function toward other RNAs. The polypeptide is RNA-splicing ligase RtcB homolog (Micromonas pusilla (strain CCMP1545) (Picoplanktonic green alga)).